The following is a 648-amino-acid chain: Threonine--tRNA ligase (648 aa).

Positions 1–63 (MTEINIEFPD…NENVKIEIVT (63 aa)) constitute a TGS domain. The segment at 243–541 (DHRVIGNNLD…LIEMYKGAFP (299 aa)) is catalytic. The Zn(2+) site is built by Cys337, His388, and His518.

Belongs to the class-II aminoacyl-tRNA synthetase family. Homodimer. It depends on Zn(2+) as a cofactor.

Its subcellular location is the cytoplasm. It catalyses the reaction tRNA(Thr) + L-threonine + ATP = L-threonyl-tRNA(Thr) + AMP + diphosphate + H(+). Its function is as follows. Catalyzes the attachment of threonine to tRNA(Thr) in a two-step reaction: L-threonine is first activated by ATP to form Thr-AMP and then transferred to the acceptor end of tRNA(Thr). Also edits incorrectly charged L-seryl-tRNA(Thr). The chain is Threonine--tRNA ligase from Pediococcus pentosaceus (strain ATCC 25745 / CCUG 21536 / LMG 10740 / 183-1w).